We begin with the raw amino-acid sequence, 237 residues long: Photosystem I-associated linker protein CpcL (237 aa).

A PBS-linker domain is found at 11–191 (TTQNQRVQSF…DYRDRAGIVR (181 aa)). The helical transmembrane segment at 208 to 228 (GVAILGVLLAISAGMTFLFVL) threads the bilayer.

This sequence belongs to the phycobilisome linker protein family. Part of a specialized phycobilisome (PBS), a structure that is usually composed of two distinct substructures: a core complex and a number of rods radiating from the core. This protein is part of a core-less PBS rod (called CpcL-PBS). In vegetative cells associated substoichiometrically with photosystem I and phycobiliproteins phycocyanin as well as phycoerythrocyanin in the thylakoid membrane, not found in conventional, hemidiscoidal phycobilisomes.

It localises to the cellular thylakoid membrane. In terms of biological role, rod linker protein, associated with phycocyanin (PC). Linker polypeptides determine the state of aggregation and the location of the disk-shaped phycobiliprotein units within the phycobilisome (PBS) and modulate their spectroscopic properties in order to mediate a directed and optimal energy transfer. Forms a supercomplex with tetrameric photosystem I (PSI) and PC that allows efficient energy transfer from PC to PSI. This protein seems to be in the middle of the PC hexameric rod and may anchor the PC rods at the periphery of PSI tetramers. May be involved in the cyclic electron transport around PSI that provides ATP needed for N(2) fixation in heterocysts. The sequence is that of Photosystem I-associated linker protein CpcL from Nostoc sp. (strain PCC 7120 / SAG 25.82 / UTEX 2576).